The primary structure comprises 534 residues: MFQFHAGSWESWCCCCLIPADRPWDRGQHWQLEMADTRSVHETRFEAAVKVIQSLPKNGSFQPTNEMMLKFYSFYKQATEGPCKLSRPGFWDPIGRYKWDAWSSLGDMTKEEAMIAYVEEMKKIIETMPMTEKVEELLRVIGPFYEIVEDKKSGRSSDITSVRLEKISKCLEDLGNVLTSTPNAKTVNGKAESSDSGAESEEEEAQEEVKGAEQSDNDKKMMKKSADHKNLEVIVTNGYDKDGFVQDIQNDIHASSSLNGRSTEEVKPIDENLGQTGKSAVCIHQDINDDHVEDVTGIQHLTSDSDSEVYCDSMEQFGQEESLDSFTSNNGPFQYYLGGHSSQPMENSGFREDIQVPPGNGNIGNMQVVAVEGKGEVKHGGEDGRNNSGAPHREKRGGETDEFSNVRRGRGHRMQHLSEGTKGRQVGSGGDGERWGSDRGSRGSLNEQIALVLMRLQEDMQNVLQRLQKLETLTALQAKSSTSTLQTAPQPTSQRPSWWPFEMSPGVLTFAIIWPFIAQWLVYLYYQRRRRKLN.

The 90-residue stretch at 41–130 (HETRFEAAVK…MKKIIETMPM (90 aa)) folds into the ACB domain. 52–61 (IQSLPKNGSF) provides a ligand contact to an acyl-CoA. A Phosphothreonine modification is found at Pro63. Residues 72 to 76 (YSFYK), Lys98, and Tyr117 contribute to the an acyl-CoA site. Residues Leu137 and Glu172 each carry the phosphothreonine modification. The segment at 181 to 225 (TPNAKTVNGKAESSDSGAESEEEEAQEEVKGAEQSDNDKKMMKKS) is disordered. Residues 190-219 (KAESSDSGAESEEEEAQEEVKGAEQSDNDK) are a coiled coil. Phosphoserine is present on residues Ser193, Ser194, Ser196, Ser200, Ser215, Ser279, and Ser313. Positions 207-225 (EEVKGAEQSDNDKKMMKKS) are enriched in basic and acidic residues. The span at 376–385 (EVKHGGEDGR) shows a compositional bias: basic and acidic residues. A disordered region spans residues 376–442 (EVKHGGEDGR…ERWGSDRGSR (67 aa)). Thr400 is modified (phosphothreonine). Phosphoserine is present on Ser428. A compositionally biased stretch (basic and acidic residues) spans 431-441 (DGERWGSDRGS). Positions 447–476 (EQIALVLMRLQEDMQNVLQRLQKLETLTAL) form a coiled coil. Position 469 is an N6-acetyllysine (Lys469). Residues 506–526 (GVLTFAIIWPFIAQWLVYLYY) form a helical membrane-spanning segment.

This sequence belongs to the ATG37 family.

The protein resides in the peroxisome membrane. Functionally, acyl-CoA binding protein which acts as the peroxisome receptor for pexophagy but is dispensable for aggrephagy and nonselective autophagy. Binds medium- and long-chain acyl-CoA esters. The protein is Acyl-CoA-binding domain-containing protein 5 (ACBD5) of Homo sapiens (Human).